A 373-amino-acid chain; its full sequence is Alpha-ketoglutarate dependent kainoid synthase (373 aa).

Residues 204–320 (TINSKKMFFT…RSSLITFYEP (117 aa)) enclose the Fe2OG dioxygenase domain. Fe cation is bound by residues His-235, Asp-237, and His-296. Arg-311 lines the 2-oxoglutarate pocket.

Belongs to the iron/ascorbate-dependent oxidoreductase family. It depends on Fe(2+) as a cofactor.

The catalysed reaction is N-(7'-carboxy-7'-demethylgeranyl)-L-glutamate + 2-oxoglutarate + O2 = isodomoate A + succinate + CO2 + H2O. It carries out the reaction N-geranyl-L-glutamate + 2-oxoglutarate + O2 = dainate A + succinate + CO2 + H2O. Its pathway is secondary metabolite biosynthesis. Its function is as follows. Iron/ascorbate-dependent oxidoreductase: part of the gene cluster that mediates the biosynthesis of domoic acid (DA) and derivatives, natural products with neurochemical activity acting as ionotropic glutamate receptor (iGluR) agonists, thus being neurotoxins causing amnesic shellfish poisoning (ASP). Catalyzes the conversion of 7'-N-carboxy-L-geranyl-L-glutamic acid (cNGG) to isodomoic acid-A. Also mediates the conversion of N-geranyl-L-glutamic acid (L-NGG) to dainic acid A. The chain is Alpha-ketoglutarate dependent kainoid synthase from Pseudo-nitzschia multiseries (Marine planktonic diatom).